The primary structure comprises 288 residues: UAP56-interacting factor (288 aa).

Positions 11–29 (TIDKIDMSLDDIIKLNKQE) match the UAP56-binding motif motif. Residues 183–202 (DLPELSKTPPWRTSVSSGGS) form a disordered region.

It belongs to the UIF family.

Its subcellular location is the nucleus. It is found in the nucleoplasm. It localises to the nucleus speckle. Its function is as follows. Required for mRNA export from the nucleus to the cytoplasm. Acts as an adapter that uses the ddx39b/uap56-nfx1 pathway to ensure efficient mRNA export and delivering to the nuclear pore. The polypeptide is UAP56-interacting factor (fyttd1) (Xenopus laevis (African clawed frog)).